The sequence spans 181 residues: ADP-ribosylation factor 2 (181 aa).

Glycine 2 carries the N-myristoyl glycine lipid modification. Residues 24-31, 67-71, and 126-129 each bind GTP; these read GLDAAGKT, DVGGQ, and NKQD.

The protein belongs to the small GTPase superfamily. Arf family.

It localises to the golgi apparatus. In terms of biological role, GTP-binding protein that functions as an allosteric activator of the cholera toxin catalytic subunit, an ADP-ribosyltransferase. Involved in protein trafficking; may modulate vesicle budding and uncoating within the Golgi apparatus. This is ADP-ribosylation factor 2 (ARF2) from Bos taurus (Bovine).